The primary structure comprises 293 residues: MTENNDIKMVIITGMSGAGKTVALQSFEDLGYFCVDNLPPMLLPKFVELMADSKSKMNKVALGIDLRGREFFEHLWGALDDLSERTWIIPHILFLDAKDSTLVTRYKETRRSHPLAPTGLPLKGIEAERGLLTDMKARANIVLDTSDLKPKELREKIVQLFSTETEQAFRVNVMSFGFKYGIPIDADLVFDVRFLPNPYYIPHMKPLTGLDEEVSSYVLKFNETHKFLEKLTDLITFMLPHYKREGKSQLVIAIGCTGGQHRSVTLAEYLGKHLKPDYSVHVSHRDVEKRKGH.

14-21 is a binding site for ATP; the sequence is GMSGAGKT. A GTP-binding site is contributed by 65-68; it reads DLRG.

Belongs to the RapZ-like family.

Displays ATPase and GTPase activities. In Bacillus cytotoxicus (strain DSM 22905 / CIP 110041 / 391-98 / NVH 391-98), this protein is Nucleotide-binding protein Bcer98_3698.